Consider the following 113-residue polypeptide: Large ribosomal subunit protein bL20c (113 aa).

Belongs to the bacterial ribosomal protein bL20 family.

It localises to the plastid. It is found in the chloroplast. Binds directly to 23S ribosomal RNA and is necessary for the in vitro assembly process of the 50S ribosomal subunit. It is not involved in the protein synthesizing functions of that subunit. The protein is Large ribosomal subunit protein bL20c of Nephroselmis olivacea (Green alga).